The sequence spans 913 residues: MSRFFANGSDSESESSEEEVQASNFNKANNFQFSDDEEEVKRVVRSTKEKRYENLTGIIKTIRNHKKIKDIPNTLSSFEDLTRAYTKALPVISKEENGITPRFYIRCLAELEDFINEVWEDREGRKNLSKNNSKSLGTLRQKVRKYIKDFEEDLARFREAPDQESDVDEGEGEAHDSDAERAGADSDGGIGAGTGKLAELPKAAKLVPTKVAADEDDSDDSIDWDSDTESETESSEDENLYQNMRERFLKRTTEKEDKDDDKRKDKRKEQKHKVRKRADDDEDGEWETVVKGNVVEKPKMFEKDAEIDIPLVLAKLVEIMSARGKKRTDRRLQIDLLFELRDISEQHELGTPISVKIHFNIISAIFDYNQKISEPMKLEHWALLLEVMQSMLKLLLANPEINMNESVAEEHEEYGAAPYFIRGCPLAAVERLDDEFTKLLKECDPHSNDYVSRLKDEINVVKTIELVVQYFERCGSNNERCRIYLRKIEHLYYKFDPEVLKRKRGELPAAGTAPSSVEVMDKLCKFIYAKDDTDRIRTRAILAHIYHHAMHDNWFQARDLVLMSHLQDNIDAADPSTRILYNRMMANLGLCAFRQENIKDAHHCLVDLMVTGKPKELLAQGLLPQRQHERSAEQEKIEKQRQMPFHMHINLELLECVYLVSAMLLEIPYIAAHEFDARRRMISKTFYQQLRSSERQSLVGPPESMREHVVAAAKAMRCGNWQACANFIVNKKMNTKVWDLFYESERVREMLVKFIKEESLRTYLFTYSNVYTSISIPSLAQMYELPLPKVHSIISKMIINEELMASLDDPSETVVMHRSEPSRLQALAMQFVDKVTNLVDVNEKVFDMKQGNFFQRGNMGNRDRGYNRNQNNQGGNWGGQRRDNRNQRNRNQRGHHKQQQQQQQQQVQTIEEE.

The segment at 1–31 is disordered; sequence MSRFFANGSDSESESSEEEVQASNFNKANNF. The span at 11–20 shows a compositional bias: acidic residues; it reads SESESSEEEV. The segment covering 21–31 has biased composition (polar residues); the sequence is QASNFNKANNF. S34, S165, S177, and S186 each carry phosphoserine. Disordered stretches follow at residues 157 to 195 and 208 to 285; these read FREA…AGTG and PTKV…EDGE. Over residues 162 to 171 the composition is skewed to acidic residues; it reads DQESDVDEGE. The span at 172 to 184 shows a compositional bias: basic and acidic residues; it reads GEAHDSDAERAGA. The segment covering 214-239 has biased composition (acidic residues); sequence DEDDSDDSIDWDSDTESETESSEDEN. Over residues 244–263 the composition is skewed to basic and acidic residues; the sequence is MRERFLKRTTEKEDKDDDKR. The segment covering 264–276 has biased composition (basic residues); sequence KDKRKEQKHKVRK. The 177-residue stretch at 645 to 821 folds into the PCI domain; the sequence is FHMHINLELL…ETVVMHRSEP (177 aa). Residues 856–913 are disordered; sequence RGNMGNRDRGYNRNQNNQGGNWGGQRRDNRNQRNRNQRGHHKQQQQQQQQQVQTIEEE. Residues 887 to 898 show a composition bias toward basic residues; the sequence is QRNRNQRGHHKQ.

The protein belongs to the eIF-3 subunit C family. Component of the eukaryotic translation initiation factor 3 (eIF-3) complex. The eIF-3 complex interacts with pix.

The protein localises to the cytoplasm. Component of the eukaryotic translation initiation factor 3 (eIF-3) complex, which is involved in protein synthesis of a specialized repertoire of mRNAs and, together with other initiation factors, stimulates binding of mRNA and methionyl-tRNAi to the 40S ribosome. The eIF-3 complex specifically targets and initiates translation of a subset of mRNAs involved in cell proliferation. This chain is Eukaryotic translation initiation factor 3 subunit C, found in Drosophila virilis (Fruit fly).